A 325-amino-acid polypeptide reads, in one-letter code: Glycerol-3-phosphate dehydrogenase [NAD(P)+] (325 aa).

W11, R30, and K103 together coordinate NADPH. K103, G131, and S133 together coordinate sn-glycerol 3-phosphate. A135 is an NADPH binding site. Residues K186, D242, S252, R253, and N254 each coordinate sn-glycerol 3-phosphate. K186 serves as the catalytic Proton acceptor. NADPH is bound at residue R253. 2 residues coordinate NADPH: V279 and E281.

The protein belongs to the NAD-dependent glycerol-3-phosphate dehydrogenase family.

Its subcellular location is the cytoplasm. The catalysed reaction is sn-glycerol 3-phosphate + NAD(+) = dihydroxyacetone phosphate + NADH + H(+). The enzyme catalyses sn-glycerol 3-phosphate + NADP(+) = dihydroxyacetone phosphate + NADPH + H(+). It functions in the pathway membrane lipid metabolism; glycerophospholipid metabolism. Functionally, catalyzes the reduction of the glycolytic intermediate dihydroxyacetone phosphate (DHAP) to sn-glycerol 3-phosphate (G3P), the key precursor for phospholipid synthesis. This is Glycerol-3-phosphate dehydrogenase [NAD(P)+] from Wolbachia pipientis subsp. Culex pipiens (strain wPip).